The following is a 501-amino-acid chain: Lysine--tRNA ligase (501 aa).

2 residues coordinate Mg(2+): Glu410 and Glu417.

It belongs to the class-II aminoacyl-tRNA synthetase family. Homodimer. Mg(2+) is required as a cofactor.

Its subcellular location is the cytoplasm. The enzyme catalyses tRNA(Lys) + L-lysine + ATP = L-lysyl-tRNA(Lys) + AMP + diphosphate. The polypeptide is Lysine--tRNA ligase (Shewanella pealeana (strain ATCC 700345 / ANG-SQ1)).